A 341-amino-acid polypeptide reads, in one-letter code: MEGLSFGPLSILPSLAEELNPHRVAFLTNTTVERLWLEKAAEGIEEPIRIVIPDGEKYKSLETAVAIWKRLQEEGFTRKSLLIGLGGGVVTDIAGFVASTYMRGTLLGLVPTTLLAQVDAAIGGKTGVNFNGKNMIGTFYLPNFVLIAHETLSTLPEEEIRNGLGEVAKYALLDRKVYALARNFEGISETLIRECALFKVEVVEKDLGESGLRRILNLGHTAGHAIEKLSNYRIKHGLAVSMGLMVASKVGEELYGFDSGKTEELLKKLGLPTGHPFRAEEILEEMRLDKKAWYGRITFVIPVEIGDVVVEEVDEAVLKRALEATRDDSGSGDCQKPGGSA.

NAD(+) contacts are provided by residues 54–59 (DGEKYK), 88–92 (GVVTD), 112–113 (TT), Lys-125, Lys-133, and 151–154 (TLST). Zn(2+)-binding residues include Glu-166, His-220, and His-236.

The protein belongs to the sugar phosphate cyclases superfamily. Dehydroquinate synthase family. It depends on NAD(+) as a cofactor. Co(2+) is required as a cofactor. Requires Zn(2+) as cofactor.

The protein resides in the cytoplasm. The catalysed reaction is 7-phospho-2-dehydro-3-deoxy-D-arabino-heptonate = 3-dehydroquinate + phosphate. Its pathway is metabolic intermediate biosynthesis; chorismate biosynthesis; chorismate from D-erythrose 4-phosphate and phosphoenolpyruvate: step 2/7. In terms of biological role, catalyzes the conversion of 3-deoxy-D-arabino-heptulosonate 7-phosphate (DAHP) to dehydroquinate (DHQ). The chain is 3-dehydroquinate synthase from Thermococcus kodakarensis (strain ATCC BAA-918 / JCM 12380 / KOD1) (Pyrococcus kodakaraensis (strain KOD1)).